Reading from the N-terminus, the 166-residue chain is Large ribosomal subunit protein uL10 (166 aa).

Belongs to the universal ribosomal protein uL10 family. Part of the ribosomal stalk of the 50S ribosomal subunit. The N-terminus interacts with L11 and the large rRNA to form the base of the stalk. The C-terminus forms an elongated spine to which L12 dimers bind in a sequential fashion forming a multimeric L10(L12)X complex.

Its function is as follows. Forms part of the ribosomal stalk, playing a central role in the interaction of the ribosome with GTP-bound translation factors. This is Large ribosomal subunit protein uL10 from Shewanella oneidensis (strain ATCC 700550 / JCM 31522 / CIP 106686 / LMG 19005 / NCIMB 14063 / MR-1).